Here is a 130-residue protein sequence, read N- to C-terminus: Small ribosomal subunit protein uS9 (130 aa).

The protein belongs to the universal ribosomal protein uS9 family.

This is Small ribosomal subunit protein uS9 from Nitrosomonas eutropha (strain DSM 101675 / C91 / Nm57).